The following is a 58-amino-acid chain: Small ribosomal subunit protein bS21 (58 aa).

A disordered region spans residues 34–58; sequence KREHYEKPSVKRKKKSEAARKRKFK. Residues 43-58 are compositionally biased toward basic residues; it reads VKRKKKSEAARKRKFK.

The protein belongs to the bacterial ribosomal protein bS21 family.

The protein is Small ribosomal subunit protein bS21 of Clostridium acetobutylicum (strain ATCC 824 / DSM 792 / JCM 1419 / IAM 19013 / LMG 5710 / NBRC 13948 / NRRL B-527 / VKM B-1787 / 2291 / W).